The following is a 199-amino-acid chain: 3-isopropylmalate dehydratase small subunit (199 aa).

The protein belongs to the LeuD family. LeuD type 1 subfamily. As to quaternary structure, heterodimer of LeuC and LeuD.

It carries out the reaction (2R,3S)-3-isopropylmalate = (2S)-2-isopropylmalate. Its pathway is amino-acid biosynthesis; L-leucine biosynthesis; L-leucine from 3-methyl-2-oxobutanoate: step 2/4. Catalyzes the isomerization between 2-isopropylmalate and 3-isopropylmalate, via the formation of 2-isopropylmaleate. In Leifsonia xyli subsp. xyli (strain CTCB07), this protein is 3-isopropylmalate dehydratase small subunit.